A 349-amino-acid polypeptide reads, in one-letter code: tRNA pseudouridine synthase D (349 aa).

Position 27 (Phe27) interacts with substrate. The active-site Nucleophile is Asp80. Asn129 provides a ligand contact to substrate. Residues Gly155 to Leu303 form the TRUD domain. Phe329 provides a ligand contact to substrate.

The protein belongs to the pseudouridine synthase TruD family.

It carries out the reaction uridine(13) in tRNA = pseudouridine(13) in tRNA. In terms of biological role, responsible for synthesis of pseudouridine from uracil-13 in transfer RNAs. This is tRNA pseudouridine synthase D from Escherichia fergusonii (strain ATCC 35469 / DSM 13698 / CCUG 18766 / IAM 14443 / JCM 21226 / LMG 7866 / NBRC 102419 / NCTC 12128 / CDC 0568-73).